Reading from the N-terminus, the 77-residue chain is Conotoxin CaHr91 (77 aa).

The N-terminal stretch at 1 to 19 (MKLTCALIITVLFLSITAD) is a signal peptide. The propeptide occupies 20–43 (DSRGKQGYRALKSIAGMLNSKTVR). 3 disulfides stabilise this stretch: Cys-45–Cys-60, Cys-52–Cys-65, and Cys-59–Cys-74.

It belongs to the conotoxin O1 superfamily. In terms of tissue distribution, expressed by the venom duct.

The protein localises to the secreted. This chain is Conotoxin CaHr91, found in Conus capitaneus (Captain cone).